Here is a 58-residue protein sequence, read N- to C-terminus: Large ribosomal subunit protein bL32 (58 aa).

Residues 1 to 23 (MAVPARHTSSAKKNRRRTHYKLT) form a disordered region. Basic residues predominate over residues 9–20 (SSAKKNRRRTHY).

It belongs to the bacterial ribosomal protein bL32 family.

This Lactococcus lactis subsp. cremoris (Streptococcus cremoris) protein is Large ribosomal subunit protein bL32 (rpmF).